The chain runs to 268 residues: Phosphatidylglycerol--prolipoprotein diacylglyceryl transferase (268 aa).

4 consecutive transmembrane segments (helical) span residues 14–34, 57–77, 90–110, and 117–137; these read LGPI…FAGW, LTFY…IIFY, FFLW…LIAF, and IGAN…IGLG. An a 1,2-diacyl-sn-glycero-3-phospho-(1'-sn-glycerol)-binding site is contributed by arginine 140. 3 consecutive transmembrane segments (helical) span residues 174 to 194, 200 to 220, and 238 to 258; these read QLFE…LVTI, YLVL…CEFF, and GQIL…AVFI.

This sequence belongs to the Lgt family.

The protein localises to the cell inner membrane. It catalyses the reaction L-cysteinyl-[prolipoprotein] + a 1,2-diacyl-sn-glycero-3-phospho-(1'-sn-glycerol) = an S-1,2-diacyl-sn-glyceryl-L-cysteinyl-[prolipoprotein] + sn-glycerol 1-phosphate + H(+). Its pathway is protein modification; lipoprotein biosynthesis (diacylglyceryl transfer). In terms of biological role, catalyzes the transfer of the diacylglyceryl group from phosphatidylglycerol to the sulfhydryl group of the N-terminal cysteine of a prolipoprotein, the first step in the formation of mature lipoproteins. This is Phosphatidylglycerol--prolipoprotein diacylglyceryl transferase from Francisella tularensis subsp. mediasiatica (strain FSC147).